Here is a 186-residue protein sequence, read N- to C-terminus: Putative 5'(3')-deoxyribonucleotidase (186 aa).

Residue D6 is the Nucleophile of the active site. 3 residues coordinate Mg(2+): D6, D8, and D137. The active-site Proton donor is the D8.

The protein belongs to the 5'(3')-deoxyribonucleotidase family. The cofactor is Mg(2+).

Dephosphorylates the 5' and 2'(3')-phosphates of deoxyribonucleotides. In Bordetella bronchiseptica (strain ATCC BAA-588 / NCTC 13252 / RB50) (Alcaligenes bronchisepticus), this protein is Putative 5'(3')-deoxyribonucleotidase.